Consider the following 64-residue polypeptide: Large ribosomal subunit protein bL33 (64 aa).

The protein belongs to the bacterial ribosomal protein bL33 family.

This chain is Large ribosomal subunit protein bL33, found in Microcystis aeruginosa (strain NIES-843 / IAM M-2473).